We begin with the raw amino-acid sequence, 225 residues long: MIIYINDKPCNAKVGDLLLNTAKLNKAHIGYICGGNGICQSCFVYVLEGAECLSEPGEDEKAFISDKLFAEGGRLACRTTIVKEGTIRVLTRAEKFRRIVLGLNVPGFITYAQTIGYNVTNKLPSGVSSIVSRVQSGRLNPVDTIGKIASGLSPASQLVYNNFIEAFPFMQAPVNMVSGVAKSAIDNASGALCTISGGRLHLPGSTCTAHDKPAEAIERITISAK.

Residues 1 to 95 (MIIYINDKPC…TIRVLTRAEK (95 aa)) enclose the 2Fe-2S ferredoxin-type domain. [2Fe-2S] cluster is bound by residues C33, C39, C42, and C77.

The cofactor is [2Fe-2S] cluster.

It localises to the chlorosome. Its function is as follows. Could play a direct role in the oxidation or reduction of the quenching species formed in the chlorosome. This Chlorobaculum tepidum (strain ATCC 49652 / DSM 12025 / NBRC 103806 / TLS) (Chlorobium tepidum) protein is Chlorosome protein J (csmJ).